The chain runs to 446 residues: Tubulin beta-5 chain (446 aa).

Residues 1–4 (MREI) carry the MREI motif motif. Residues glutamine 11, glutamate 69, serine 138, glycine 142, threonine 143, glycine 144, asparagine 204, and asparagine 226 each contribute to the GTP site. Glutamate 69 contributes to the Mg(2+) binding site. Glutamate 438 is subject to 5-glutamyl polyglutamate.

The protein belongs to the tubulin family. As to quaternary structure, dimer of alpha and beta chains. A typical microtubule is a hollow water-filled tube with an outer diameter of 25 nm and an inner diameter of 15 nM. Alpha-beta heterodimers associate head-to-tail to form protofilaments running lengthwise along the microtubule wall with the beta-tubulin subunit facing the microtubule plus end conferring a structural polarity. Microtubules usually have 13 protofilaments but different protofilament numbers can be found in some organisms and specialized cells. Mg(2+) is required as a cofactor. Some glutamate residues at the C-terminus are polyglycylated, resulting in polyglycine chains on the gamma-carboxyl group. Glycylation is mainly limited to tubulin incorporated into axonemes (cilia and flagella) whereas glutamylation is prevalent in neuronal cells, centrioles, axonemes, and the mitotic spindle. Both modifications can coexist on the same protein on adjacent residues, and lowering polyglycylation levels increases polyglutamylation, and reciprocally. The precise function of polyglycylation is still unclear. In terms of processing, some glutamate residues at the C-terminus are polyglutamylated, resulting in polyglutamate chains on the gamma-carboxyl group. Polyglutamylation plays a key role in microtubule severing by spastin (SPAST). SPAST preferentially recognizes and acts on microtubules decorated with short polyglutamate tails: severing activity by SPAST increases as the number of glutamates per tubulin rises from one to eight, but decreases beyond this glutamylation threshold.

Its subcellular location is the cytoplasm. The protein resides in the cytoskeleton. Its function is as follows. Tubulin is the major constituent of microtubules, a cylinder consisting of laterally associated linear protofilaments composed of alpha- and beta-tubulin heterodimers. Microtubules grow by the addition of GTP-tubulin dimers to the microtubule end, where a stabilizing cap forms. Below the cap, tubulin dimers are in GDP-bound state, owing to GTPase activity of alpha-tubulin. In Gallus gallus (Chicken), this protein is Tubulin beta-5 chain.